Consider the following 665-residue polypeptide: Glycine--tRNA ligase beta subunit (665 aa).

This sequence belongs to the class-II aminoacyl-tRNA synthetase family. In terms of assembly, tetramer of two alpha and two beta subunits.

The protein localises to the cytoplasm. It carries out the reaction tRNA(Gly) + glycine + ATP = glycyl-tRNA(Gly) + AMP + diphosphate. In Rickettsia prowazekii (strain Madrid E), this protein is Glycine--tRNA ligase beta subunit (glyS).